Consider the following 478-residue polypeptide: GDP-fucose protein O-fucosyltransferase 3 (478 aa).

Residues 1 to 8 are Cytoplasmic-facing; the sequence is MVWIQRRR. The helical; Signal-anchor for type II membrane protein transmembrane segment at 9–31 threads the bilayer; the sequence is LLASCLCITATVFLLVTLQVVVE. The Lumenal segment spans residues 32-478; that stretch reads LGKFERKKFK…QEFWALVFKD (447 aa). 2 N-linked (GlcNAc...) asparagine glycosylation sites follow: Asn110 and Asn168. Cysteines 389 and 392 form a disulfide.

Belongs to the glycosyltransferase 10 family.

Its subcellular location is the endoplasmic reticulum membrane. It carries out the reaction L-threonyl-[protein] + GDP-beta-L-fucose = 3-O-(alpha-L-fucosyl)-L-threonyl-[protein] + GDP + H(+). The enzyme catalyses L-seryl-[protein] + GDP-beta-L-fucose = 3-O-(alpha-L-fucosyl)-L-seryl-[protein] + GDP + H(+). Its pathway is protein modification; protein glycosylation. In terms of biological role, protein O-fucosyltransferase that specifically catalyzes O-fucosylation of serine or threonine residues in EMI domains of target proteins, such as MMRN1, MMRN2 and EMID1. Attaches fucose through an O-glycosidic linkage. O-fucosylation of EMI domain-containing proteins may be required for facilitating protein folding and secretion. May also show alpha-(1,3)-fucosyltransferase activity toward the innermost N-acetyl glucosamine (GlcNAc) residue in biantennary N-glycan acceptors. However, this was tested with a library of synthetic substrates and this activity is unsure in vivo. May be involved in biosynthesis of Lewis X-carrying biantennary N-glycans that regulate neuron stem cell self-renewal during brain development. The sequence is that of GDP-fucose protein O-fucosyltransferase 3 (FUT10) from Canis lupus familiaris (Dog).